Reading from the N-terminus, the 175-residue chain is Large ribosomal subunit protein uL10 (175 aa).

This sequence belongs to the universal ribosomal protein uL10 family. As to quaternary structure, part of the ribosomal stalk of the 50S ribosomal subunit. The N-terminus interacts with L11 and the large rRNA to form the base of the stalk. The C-terminus forms an elongated spine to which L12 dimers bind in a sequential fashion forming a multimeric L10(L12)X complex.

In terms of biological role, forms part of the ribosomal stalk, playing a central role in the interaction of the ribosome with GTP-bound translation factors. The protein is Large ribosomal subunit protein uL10 of Pelotomaculum thermopropionicum (strain DSM 13744 / JCM 10971 / SI).